Here is a 627-residue protein sequence, read N- to C-terminus: Ras and EF-hand domain-containing protein homolog (627 aa).

Positions 55 to 245 (YERVIRNFLR…RKLHDSNDGL (191 aa)) form a coiled coil. A phosphoserine mark is found at Ser266 and Ser272. GTP-binding positions include 438–443 (AVGKSS), 541–544 (NKAD), and 578–579 (AK).

The protein belongs to the small GTPase superfamily. Rab family. In terms of assembly, homodimer. Interacts with the dynein-dynactin complex.

It is found in the cytoplasm. Its subcellular location is the perinuclear region. Binds predominantly GDP, and also GTP. Acts as a dynein adapter protein that activates dynein-mediated transport and dynein-dynactin motility on microtubules. In Mus musculus (Mouse), this protein is Ras and EF-hand domain-containing protein homolog (Rasef).